We begin with the raw amino-acid sequence, 349 residues long: Ferredoxin--NADP reductase 1 (349 aa).

Residues glutamate 36, lysine 44, tyrosine 48, valine 88, leucine 123, aspartate 290, and serine 331 each contribute to the FAD site.

The protein belongs to the ferredoxin--NADP reductase type 2 family. In terms of assembly, homodimer. It depends on FAD as a cofactor.

The enzyme catalyses 2 reduced [2Fe-2S]-[ferredoxin] + NADP(+) + H(+) = 2 oxidized [2Fe-2S]-[ferredoxin] + NADPH. The polypeptide is Ferredoxin--NADP reductase 1 (Bacillus cytotoxicus (strain DSM 22905 / CIP 110041 / 391-98 / NVH 391-98)).